We begin with the raw amino-acid sequence, 58 residues long: Glutathione reductase (58 aa).

The FAD site is built by Glu-5, Thr-12, Cys-13, and Lys-21. Cys-13 and Cys-18 are disulfide-bonded.

It belongs to the class-I pyridine nucleotide-disulfide oxidoreductase family. As to quaternary structure, homodimer. Requires FAD as cofactor.

It is found in the cytoplasm. It carries out the reaction 2 glutathione + NADP(+) = glutathione disulfide + NADPH + H(+). Functionally, catalyzes the reduction of glutathione disulfide (GSSG) to reduced glutathione (GSH). Constitutes the major mechanism to maintain a high GSH:GSSG ratio in the cytosol. The polypeptide is Glutathione reductase (Spirulina sp).